We begin with the raw amino-acid sequence, 481 residues long: ATP synthase subunit beta, chloroplastic (481 aa).

161–168 contacts ATP; the sequence is GGAGVGKT.

The protein belongs to the ATPase alpha/beta chains family. As to quaternary structure, F-type ATPases have 2 components, CF(1) - the catalytic core - and CF(0) - the membrane proton channel. CF(1) has five subunits: alpha(3), beta(3), gamma(1), delta(1), epsilon(1). CF(0) has four main subunits: a(1), b(1), b'(1) and c(9-12).

The protein resides in the plastid. Its subcellular location is the chloroplast thylakoid membrane. The catalysed reaction is ATP + H2O + 4 H(+)(in) = ADP + phosphate + 5 H(+)(out). Functionally, produces ATP from ADP in the presence of a proton gradient across the membrane. The catalytic sites are hosted primarily by the beta subunits. This chain is ATP synthase subunit beta, chloroplastic, found in Dictyota dichotoma.